We begin with the raw amino-acid sequence, 72 residues long: SRY-related protein AES6 (72 aa).

Residues 1 to 69 (VKRPMNAFMV…KHMADYPDYK (69 aa)) constitute a DNA-binding region (HMG box).

Its subcellular location is the nucleus. This chain is SRY-related protein AES6, found in Alligator mississippiensis (American alligator).